Reading from the N-terminus, the 903-residue chain is Centrobin (903 aa).

The span at 1–10 shows a compositional bias: polar residues; the sequence is MATSADSPSS. Positions 1–34 are disordered; that stretch reads MATSADSPSSPLGAEDLLSDSSEPPGLNQVSSEV. Residue Ser80 is modified to Phosphoserine. 6 disordered regions span residues 110–140, 471–493, 568–597, 669–704, 772–799, and 837–903; these read LQTS…DSDS, LRQA…GQHQ, LSTT…KEER, SALG…LPPA, RVPE…DGLT, and SGTD…GVWR. Positions 196-560 form a coiled coil; it reads RRKHCERHIQ…ERLQAMLQAH (365 aa). The tract at residues 365-903 is required for centrosome localization; that stretch reads QEHQLKEHYQ…SMRSRGGVWR (539 aa). Over residues 572–590 the composition is skewed to pro residues; sequence LPPPNPPAPPAGPSSPGPQ. Residues 675-685 show a composition bias toward basic and acidic residues; the sequence is HPDHRAERPFP. Low complexity predominate over residues 778–791; sequence SSHSQGSGPSSGSP. The residue at position 790 (Ser790) is a Phosphoserine. The segment covering 837–863 has biased composition (basic and acidic residues); the sequence is SGTDGRGDNVPRRNTDSRLGEIPRKEI.

As to quaternary structure, interacts with LYST. Widely expressed (at protein level). Highly expressed in testis. Also expressed in spleen, thymus, prostate, small intestine, colon and peripheral blood leukocytes.

The protein resides in the cytoplasm. The protein localises to the cytoskeleton. Its subcellular location is the microtubule organizing center. It localises to the centrosome. It is found in the centriole. In terms of biological role, required for centriole duplication. Inhibition of centriole duplication leading to defects in cytokinesis. This chain is Centrobin (CNTROB), found in Homo sapiens (Human).